The following is a 652-amino-acid chain: ATP-dependent RNA helicase DDX51 (652 aa).

Positions 1–145 are disordered; that stretch reads MALFTINRYL…KAEKAEELTS (145 aa). A compositionally biased stretch (low complexity) spans 25 to 34; it reads KALLAKLQKQ. 2 stretches are compositionally biased toward basic and acidic residues: residues 66–77 and 107–122; these read LQETKGKIKKSE and VIVK…EKSV. The Q motif signature appears at 212-220; the sequence is FFPVQAEVI. The region spanning 234–442 is the Helicase ATP-binding domain; it reads GPGGYRPRDV…LLDLHQPRLF (209 aa). ATP is bound at residue 247 to 254; it reads APTGSGKT. Residues 362–365 carry the DEAD box motif; that stretch reads DEAD. In terms of domain architecture, Helicase C-terminal spans 480 to 626; the sequence is IILHFLLRLK…KQHVHPEALK (147 aa).

This sequence belongs to the DEAD box helicase family. DDX51/DBP6 subfamily.

The protein localises to the nucleus. The protein resides in the nucleolus. The enzyme catalyses ATP + H2O = ADP + phosphate + H(+). Its function is as follows. ATP-binding RNA helicase involved in the biogenesis of 60S ribosomal subunits. The protein is ATP-dependent RNA helicase DDX51 (ddx51) of Danio rerio (Zebrafish).